The sequence spans 159 residues: V-type proton ATPase 16 kDa proteolipid subunit c (159 aa).

At 1–11 (MSEEGSPMYSP) the chain is on the lumenal side. Residues 12–32 (FFGVMGAASAMVFSALGAAYG) traverse the membrane as a helical segment. Topologically, residues 33–54 (TAKSGVGISAMSVMRPELIMKC) are cytoplasmic. Residues 55-75 (IIPVVMAGIIAIYGLVVAVLI) traverse the membrane as a helical segment. The Lumenal segment spans residues 76 to 93 (AGKLDEAPTYTLYQGFVH). The chain crosses the membrane as a helical span at residues 94 to 114 (MGAGLSVGLSGLAAGFAIGIV). The Cytoplasmic portion of the chain corresponds to 115 to 132 (GDAGVRGTAQQPRLYVGM). A helical membrane pass occupies residues 133-153 (ILILIFAEVLGLYGLIVAIFL). The Lumenal segment spans residues 154-159 (YTKTSS).

Belongs to the V-ATPase proteolipid subunit family. As to quaternary structure, V-ATPase is a heteromultimeric enzyme made up of two complexes: the ATP-hydrolytic V1 complex and the proton translocation V0 complex. The V1 complex consists of three catalytic AB heterodimers that form a heterohexamer, three peripheral stalks each consisting of EG heterodimers, one central rotor including subunits D and F, and the regulatory subunits C and H. The proton translocation complex V0 consists of the proton transport subunit a, a ring of proteolipid subunits c9c'', rotary subunit d, subunits e and f, and two accessory subunits.

It is found in the vacuole membrane. Proton-conducting pore forming subunit of the V0 complex of vacuolar(H+)-ATPase (V-ATPase), a multisubunit enzyme composed of a peripheral complex (V1) that hydrolyzes ATP and a membrane integral complex (V0) that translocates protons. V-ATPase is responsible for acidifying and maintaining the pH of intracellular compartments and in some cell types, is targeted to the plasma membrane, where it is responsible for acidifying the extracellular environment. The chain is V-type proton ATPase 16 kDa proteolipid subunit c from Nephrops norvegicus (Norway lobster).